Reading from the N-terminus, the 213-residue chain is tRNA (guanine-N(7)-)-methyltransferase (213 aa).

Residues glutamate 44, glutamate 69, asparagine 96, and aspartate 118 each contribute to the S-adenosyl-L-methionine site. Aspartate 118 is an active-site residue. Lysine 122 lines the substrate pocket. Residues 124–129 form an interaction with RNA region; the sequence is RHEKRR. Substrate is bound by residues aspartate 154 and 191-194; that span reads TEYE.

Belongs to the class I-like SAM-binding methyltransferase superfamily. TrmB family.

The enzyme catalyses guanosine(46) in tRNA + S-adenosyl-L-methionine = N(7)-methylguanosine(46) in tRNA + S-adenosyl-L-homocysteine. The protein operates within tRNA modification; N(7)-methylguanine-tRNA biosynthesis. Catalyzes the formation of N(7)-methylguanine at position 46 (m7G46) in tRNA. The protein is tRNA (guanine-N(7)-)-methyltransferase of Oceanobacillus iheyensis (strain DSM 14371 / CIP 107618 / JCM 11309 / KCTC 3954 / HTE831).